A 65-amino-acid chain; its full sequence is Large ribosomal subunit protein bL35 (65 aa).

A compositionally biased stretch (basic residues) spans 1–16; that stretch reads MPKMKTKSSAKKRFKV. A disordered region spans residues 1 to 26; the sequence is MPKMKTKSSAKKRFKVRSSGGIKRSQ.

This sequence belongs to the bacterial ribosomal protein bL35 family.

The protein is Large ribosomal subunit protein bL35 of Azoarcus sp. (strain BH72).